The chain runs to 150 residues: 3-hydroxyacyl-[acyl-carrier-protein] dehydratase FabZ (150 aa).

Residue histidine 47 is part of the active site.

This sequence belongs to the thioester dehydratase family. FabZ subfamily.

The protein localises to the cytoplasm. The enzyme catalyses a (3R)-hydroxyacyl-[ACP] = a (2E)-enoyl-[ACP] + H2O. In terms of biological role, involved in unsaturated fatty acids biosynthesis. Catalyzes the dehydration of short chain beta-hydroxyacyl-ACPs and long chain saturated and unsaturated beta-hydroxyacyl-ACPs. The polypeptide is 3-hydroxyacyl-[acyl-carrier-protein] dehydratase FabZ (Verminephrobacter eiseniae (strain EF01-2)).